An 889-amino-acid polypeptide reads, in one-letter code: Protein translocase subunit SecA (889 aa).

ATP-binding positions include Gln-87, 105–109, and Asp-494; that span reads GEGKT. Residues 823 to 889 form a disordered region; the sequence is ESLRPEEADL…RMDKDTKGKR (67 aa). Over residues 867 to 889 the composition is skewed to basic and acidic residues; sequence PRDDRPMNREERRRMDKDTKGKR.

It belongs to the SecA family. Monomer and homodimer. Part of the essential Sec protein translocation apparatus which comprises SecA, SecYEG and auxiliary proteins SecDF-YajC and YidC.

Its subcellular location is the cell inner membrane. It localises to the cytoplasm. It catalyses the reaction ATP + H2O + cellular proteinSide 1 = ADP + phosphate + cellular proteinSide 2.. Its function is as follows. Part of the Sec protein translocase complex. Interacts with the SecYEG preprotein conducting channel. Has a central role in coupling the hydrolysis of ATP to the transfer of proteins into and across the cell membrane, serving as an ATP-driven molecular motor driving the stepwise translocation of polypeptide chains across the membrane. In Bdellovibrio bacteriovorus (strain ATCC 15356 / DSM 50701 / NCIMB 9529 / HD100), this protein is Protein translocase subunit SecA.